A 477-amino-acid chain; its full sequence is Mitochondrial adenyl nucleotide antiporter SLC25A24 (477 aa).

The interval methionine 1 to aspartate 174 is regulatory N-terminal domain. Residues methionine 1 to glutamine 198 lie on the Mitochondrial intermembrane side of the membrane. The EF-hand 1 domain occupies aspartate 20 to serine 55. Ca(2+) contacts are provided by aspartate 33, asparagine 35, aspartate 37, lysine 39, glutamate 44, aspartate 69, aspartate 71, aspartate 73, glutamate 80, aspartate 100, asparagine 102, aspartate 104, arginine 106, glutamate 111, aspartate 136, aspartate 138, threonine 140, threonine 142, and glutamate 147. EF-hand domains are found at residues glutamate 87 to asparagine 122 and leucine 123 to glutamate 158. The segment at leucine 160–lysine 169 is linker region. The segment at isoleucine 175 to lysine 477 is C-terminal transmembrane transporter domain. Solcar repeat units follow at residues glycine 193–leucine 279, valine 287–threonine 372, and proline 384–glycine 472. A helical transmembrane segment spans residues leucine 199–leucine 216. The Mitochondrial matrix segment spans residues aspartate 217–arginine 253. The helical transmembrane segment at glycine 254–tyrosine 273 threads the bilayer. At glutamate 274–glycine 296 the chain is on the mitochondrial intermembrane side. The chain crosses the membrane as a helical span at residues serine 297 to methionine 310. The Mitochondrial matrix segment spans residues glutamate 311–lysine 346. Residues glycine 347–tyrosine 366 traverse the membrane as a helical segment. The Mitochondrial intermembrane segment spans residues glutamate 367–leucine 389. Residues leucine 390–leucine 407 traverse the membrane as a helical segment. The Mitochondrial matrix segment spans residues alanine 408–arginine 446. Residues glycine 447–tyrosine 466 form a helical membrane-spanning segment. Topologically, residues glutamate 467–lysine 477 are mitochondrial intermembrane.

This sequence belongs to the mitochondrial carrier (TC 2.A.29) family. As to quaternary structure, monomer.

The protein resides in the mitochondrion inner membrane. It catalyses the reaction Mg(2+)(out) + phosphate(in) + ATP(out) = Mg(2+)(in) + phosphate(out) + ATP(in). It carries out the reaction ADP(out) + phosphate(in) + H(+)(out) = ADP(in) + phosphate(out) + H(+)(in). The enzyme catalyses AMP(out) + phosphate(in) = AMP(in) + phosphate(out). The catalysed reaction is phosphate(in) + ATP(out) + 2 H(+)(out) = phosphate(out) + ATP(in) + 2 H(+)(in). It catalyses the reaction dADP(in) + ADP(out) = dADP(out) + ADP(in). It carries out the reaction Mg(2+)(in) + ADP(out) + ATP(in) + H(+)(out) = Mg(2+)(out) + ADP(in) + ATP(out) + H(+)(in). The enzyme catalyses ADP(out) + diphosphate(in) = ADP(in) + diphosphate(out). The catalysed reaction is dAMP(in) + ADP(out) + H(+)(out) = dAMP(out) + ADP(in) + H(+)(in). It catalyses the reaction 3'-AMP(in) + ADP(out) + H(+)(out) = 3'-AMP(out) + ADP(in) + H(+)(in). It carries out the reaction dAMP(out) + phosphate(in) = dAMP(in) + phosphate(out). The enzyme catalyses 3'-AMP(out) + phosphate(in) = 3'-AMP(in) + phosphate(out). The catalysed reaction is dADP(out) + phosphate(in) + H(+)(out) = dADP(in) + phosphate(out) + H(+)(in). Activated by an increase in cytosolic calcium levels that induce a conformational change of the N-terminal regulatory domain, uncapping the channel and allowing transport. Inhibited by bathophenanthroline, mersalyl, p-hydroxymercuribenzoate, bromcresol purple and tannic acid. Its function is as follows. Electroneutral antiporter that mediates the transport of adenyl nucleotides through the inner mitochondrial membrane. Originally identified as an ATP-magnesium/inorganic phosphate antiporter, it also acts as a broad specificity adenyl nucleotide antiporter. By regulating the mitochondrial matrix adenyl nucleotide pool could adapt to changing cellular energetic demands and indirectly regulate adenyl nucleotide-dependent metabolic pathways. The chain is Mitochondrial adenyl nucleotide antiporter SLC25A24 (slc25a24) from Danio rerio (Zebrafish).